A 143-amino-acid polypeptide reads, in one-letter code: Ribosomal RNA large subunit methyltransferase H (143 aa).

S-adenosyl-L-methionine-binding positions include Gly-95 and 111-116 (FSDLTF).

Belongs to the RNA methyltransferase RlmH family. In terms of assembly, homodimer.

It localises to the cytoplasm. It carries out the reaction pseudouridine(1915) in 23S rRNA + S-adenosyl-L-methionine = N(3)-methylpseudouridine(1915) in 23S rRNA + S-adenosyl-L-homocysteine + H(+). Specifically methylates the pseudouridine at position 1915 (m3Psi1915) in 23S rRNA. The sequence is that of Ribosomal RNA large subunit methyltransferase H from Metamycoplasma arthritidis (strain 158L3-1) (Mycoplasma arthritidis).